A 213-amino-acid polypeptide reads, in one-letter code: Ras-related protein Rab-19 (213 aa).

Ser-24, Val-26, Gly-27, Lys-28, Thr-29, Cys-30, Asp-42, and Thr-47 together coordinate GTP. Thr-29 serves as a coordination point for Mg(2+). Residues 37–52 (SGIFMDNQQNTIGVDF) carry the Switch 1 motif. Mg(2+) is bound by residues Thr-47 and Asp-70. The Switch 2 motif lies at 72-87 (AGQERFRTITQSYYRS). Residues Gly-73, Asn-128, Lys-129, Asp-131, Ser-159, Ala-160, and Lys-161 each contribute to the GTP site. 2 S-geranylgeranyl cysteine lipidation sites follow: Cys-211 and Cys-213. Cys-213 carries the post-translational modification Cysteine methyl ester.

Belongs to the small GTPase superfamily. Rab family. Mg(2+) serves as cofactor.

It is found in the cell membrane. The catalysed reaction is GTP + H2O = GDP + phosphate + H(+). Regulated by guanine nucleotide exchange factors (GEFs) which promote the exchange of bound GDP for free GTP. Regulated by GTPase activating proteins (GAPs) which increase the GTP hydrolysis activity. Inhibited by GDP dissociation inhibitors (GDIs). Functionally, the small GTPases Rab are key regulators of intracellular membrane trafficking, from the formation of transport vesicles to their fusion with membranes. Rabs cycle between an inactive GDP-bound form and an active GTP-bound form that is able to recruit to membranes different set of downstream effectors directly responsible for vesicle formation, movement, tethering and fusion. This chain is Ras-related protein Rab-19 (rab19), found in Xenopus laevis (African clawed frog).